We begin with the raw amino-acid sequence, 228 residues long: HTH-type transcriptional activator FasR (228 aa).

Positions 1 to 39 are disordered; the sequence is MSDLAKTAQRRALRSSGSARPDEDVPAPNRRGNRLPRDE. One can recognise an HTH tetR-type domain in the interval 38-98; sequence DERRGQLLVV…AVLHRHVENL (61 aa). Residues 61–80 constitute a DNA-binding region (H-T-H motif); the sequence is GMDEIADRAGVSKPVLYQHF.

In terms of assembly, homodimer.

With respect to regulation, fasR:DNA binding is regulated by long-chain acyl-CoAs (C14- to C26-CoA), which act as effector molecules that modulate the affinity of FasR for its DNA binding sequences and therefore modulate the expression of the essential fas-acpS operon. FasR activity is not affected by mycolic acid biosynthesis intermediates. Functionally, transcriptional activator that plays a central role in sensing mycobacterial long-chain fatty acids and regulating lipid biosynthesis. Activates the expression of the genes encoding the fatty acid synthase (fas) and the 4-phosphopantetheinyl transferase (acpS), whose products are involved in the fatty acid and mycolic acid biosynthesis. Specifically binds to three conserved operator sequences present in the fas-acpS promoter region. Not essential for M.tuberculosis viability, although it is required for the optimal growth in vitro and for virulence in macrophages and in a mouse model of infection. This chain is HTH-type transcriptional activator FasR, found in Mycobacterium tuberculosis (strain ATCC 25618 / H37Rv).